We begin with the raw amino-acid sequence, 575 residues long: Mitochondrial 2-methylisocitrate lyase ICL2 (575 aa).

The active site involves Cys238.

The protein belongs to the isocitrate lyase/PEP mutase superfamily. Isocitrate lyase family.

The protein localises to the mitochondrion matrix. It catalyses the reaction (2S,3R)-3-hydroxybutane-1,2,3-tricarboxylate = pyruvate + succinate. The protein operates within organic acid metabolism; propanoate degradation. In terms of biological role, catalyzes the formation of pyruvate and succinate from 2-methylisocitrate during the metabolism of endogenous propionyl-CoA. Does not act on isocitrate. The chain is Mitochondrial 2-methylisocitrate lyase ICL2 (ICL2) from Saccharomyces cerevisiae (strain ATCC 204508 / S288c) (Baker's yeast).